We begin with the raw amino-acid sequence, 204 residues long: Acyl-homoserine-lactone synthase (204 aa).

It belongs to the autoinducer synthase family.

The catalysed reaction is a fatty acyl-[ACP] + S-adenosyl-L-methionine = an N-acyl-L-homoserine lactone + S-methyl-5'-thioadenosine + holo-[ACP] + H(+). In terms of biological role, required for the synthesis of acyl-HSL autoinducers that bind to SolR. This Ralstonia nicotianae (strain ATCC BAA-1114 / GMI1000) (Ralstonia solanacearum) protein is Acyl-homoserine-lactone synthase (solI).